The following is a 1275-amino-acid chain: MKKISKCAFVAISALVLIQATQTVKSQEPLVQSQLVTTVALTQDNRLLVEEIGPYASQSAGKEYYKHIEKIIVDNDVYEKSLEGERTFDINYQGIKINADLIKDGKHELTIVNKKDGDILITFIKKGDKVTFISAQKLGTTDHQDSLKKDVLSDKTVPQNQGTQKVVKSGKNTANLSLITKLSQEDGAILFPEIDRYSDNKQIKALTQQITKVTVNGTVYKDLISDSVKDTNGWVSNMTGLHLGTKAFKDGENTIVISSKGFEDVTITVTKKDGQIHFVSAKQKQHVTAEDRQSTKLDVTTLEKAIKEADAIIAKESNKDAVKDLAEKLQVIKDSYKEIKDSKLLADTHRLLKDTIESYQAGEVSINNLTEGTYTLNFKANKENSEESSMLQGAFDKRAKLVVKADGTMEISMLNTALGQFLIDFSIESKGTYPAAVRKQVGQKDINGSYIRSEFTMPIDDLDKLHKGAVLVSAMGGQESDLNHYDKYTKLDMTFSKTVTKGWSGYQVETDDKEKGVGTERLEKVLVKLGKDLDGDGKLSKTELEQIRGELRLDHYELTDISLLKHAKNITELHLDGNQITEIPKELFSQMKQLRFLNLRSNHLTYLDKDTFKSNAQLRELYLSSNFIHSLEGGLFQSLHHLEQLDLSKNRIGRLCDNPFEGLSRLTSLGFAENSLEEIPEKALEPLTSLNFIDLSQNNLALLPKTIEKLRALSTIVASRNHITRIDNISFKNLPKLSVLDLSTNEISNLPNGIFKQNNQLTKLDFFNNLLTQVEESVFPDVETLNLDVKFNQIKSVSPKVRALIGQHKLTPQKHIAKLEASLDGEKIKYHQAFSLLDLYYWEQKTNSAIDKELVSVEEYQQLLQEKGSDTVSLLNDMQVDWSIVIQLQKKASNGQYVTVDEKLLSNDPKDDLTGEFSLKDPGTYRIRKALITKKFATQKEHIYLTSNDILVAKGPHSHQKDLVENGLRALNQKQLRDGIYYLNASMLKTDLASESMSNKAINHRVTLVVKKGVSYLEVEFRGIKVGKMLGYLGELSYFVDGYQRDLAGKPVGRTKKAEVVSYFTDVTGLPLADRYGKNYPKVLRMKLIEQAKKDGLVPLQVFVPIMDAISKGSGLQTVFMRLDWASLTTEKAKVVKETNNPQENSHLTSTDQLKGPQNRQQEKTPTSPPSAATGIANLTDLLAKKATGQSTQETSKTDDTDKAEKLKQLVRDHQTSIEGKTAKDTKTKKSDKKHRSNQQSNGEESSSRYHLIAGLSSFMIVALGFIIGRKTLFK.

The first 26 residues, 1-26 (MKKISKCAFVAISALVLIQATQTVKS), serve as a signal peptide directing secretion. The segment at 61-123 (GKEYYKHIEK…KKDGDILITF (63 aa)) is HID 1. 4 residues coordinate heme: Thr-87, Arg-196, Tyr-197, and Met-238. The segment at 203-269 (IKALTQQITK…KGFEDVTITV (67 aa)) is HID 2. Residues 369–501 (LTEGTYTLNF…DMTFSKTVTK (133 aa)) enclose the NEAT 1 domain. LRR repeat units lie at residues 544 to 567 (LEQIRGELRLDHYELTDISLLKHA), 568 to 590 (KNITELHLDGNQITEIPKELFSQ), 592 to 614 (KQLRFLNLRSNHLTYLDKDTFKS), 616 to 638 (AQLRELYLSSNFIHSLEGGLFQS), 639 to 662 (LHHLEQLDLSKNRIGRLCDNPFEG), 664 to 686 (SRLTSLGFAENSLEEIPEKALEP), 687 to 710 (LTSLNFIDLSQNNLALLPKTIEKL), 712 to 733 (ALSTIVASRNHITRIDNISFKN), 734 to 757 (LPKLSVLDLSTNEISNLPNGIFKQ), 759 to 781 (NQLTKLDFFNNLLTQVEESVFPD), and 783 to 804 (ETLNLDVKFNQIKSVSPKVRAL). In terms of domain architecture, NEAT 2 spans 976–1138 (LRDGIYYLNA…TTEKAKVVKE (163 aa)). Disordered stretches follow at residues 1137-1174 (KETNNPQENSHLTSTDQLKGPQNRQQEKTPTSPPSAAT), 1186-1205 (KATGQSTQETSKTDDTDKAE), and 1210-1248 (LVRDHQTSIEGKTAKDTKTKKSDKKHRSNQQSNGEESSS). Residues 1138–1166 (ETNNPQENSHLTSTDQLKGPQNRQQEKTP) show a composition bias toward polar residues. 2 stretches are compositionally biased toward basic and acidic residues: residues 1196 to 1205 (SKTDDTDKAE) and 1210 to 1229 (LVRDHQTSIEGKTAKDTKTK). Residues 1250 to 1269 (YHLIAGLSSFMIVALGFIIG) traverse the membrane as a helical segment.

It is found in the cell membrane. May modulate heme uptake according to heme availability. In the presence of high heme concentrations, NEAT 1 facilitates fast heme delivery to Shp, whereas NEAT 2 serves as a temporary storage for heme on the bacterial surface. When heme availability is limiting, heme from NEAT 2 is transferred back to NEAT 1 and from there to Shp. In terms of biological role, hemoprotein receptor that plays a central role in the acquisition of host heme, a source of iron during bacterial infection, and is therefore an important virulence factor. Captures host hemoproteins and their iron-containing heme molecules, and transfers the heme to the cell surface heme-binding protein Shp. Plays a pivotal role in iron acquisition and growth under iron-starvation conditions. Uses a cap and release mechanism in which Shr forms a dynamic complex with hemoglobin that enables the gated release of its most labile heme molecule. This mechanism exploits the hemoglobin beta subunit's inherent weaker affinity for heme, allowing S.pyogenes to preferentially capture only heme-saturated forms of hemoglobin that contain iron. In vitro, binds directly to a variety of heme-containing proteins, including hemoglobin, myoglobin, heme albumin and the hemoglobin-haptoglobin complex. It also binds to and acquires heme from methemoglobin, the ferric form of hemoglobin, which is likely to be a physiologically relevant heme source for the hemolytic group A streptococcus (GAS). Seems to have an inherent ability to reduce the ferric heme present in methemoglobin to ferrous heme and to provide a stable environment for the produced ferrous complex. Does not bind apohemoglobin, apohaptoglobin, fibrinogen or streptavidin, indicating that it specifically recognizes hemoproteins. In addition to its role in heme acquisition, functions as an adhesin, contributing to host cell adhesion and hence virulence. Specifically binds to extracellular matrix (ECM) components, including fibronectin and laminin, and mediates bacterial attachment to host epithelial cells. The chain is Streptococcal hemoprotein receptor from Streptococcus pyogenes serotype M1.